The primary structure comprises 807 residues: uncharacterized protein (807 aa).

A signal peptide spans 1–18; that stretch reads MNTVLFVILLAAIGSNHG. Residues 19–704 are Extracellular-facing; that stretch reads LIDERLTVNR…GLFTDIFGGE (686 aa). Residues 133–142 are compositionally biased toward polar residues; that stretch reads TTTTAAPQTG. The segment at 133–171 is disordered; sequence TTTTAAPQTGNRRRRRAAGDEPNTDDNTPPNLEIPDWLD. N-linked (GlcNAc...) asparagine; by host glycosylation is found at Asn-277 and Asn-660. A helical transmembrane segment spans residues 705-725; sequence VWAVIAAIFSPVFLTAFALII. The Cytoplasmic portion of the chain corresponds to 726–807; the sequence is SLINFIPAVR…GERQVISRTN (82 aa).

It localises to the host membrane. This is an uncharacterized protein from Magallana gigas (Pacific oyster).